A 174-amino-acid polypeptide reads, in one-letter code: dCTP deaminase, dUMP-forming (174 aa).

Residues 93–98 (RSSIGR), Asp-111, 119–121 (TLE), Gln-138, and Tyr-151 each bind dCTP. Glu-121 functions as the Proton donor/acceptor in the catalytic mechanism.

It belongs to the dCTP deaminase family. As to quaternary structure, homotrimer.

The catalysed reaction is dCTP + 2 H2O = dUMP + NH4(+) + diphosphate. The protein operates within pyrimidine metabolism; dUMP biosynthesis; dUMP from dCTP: step 1/1. Bifunctional enzyme that catalyzes both the deamination of dCTP to dUTP and the hydrolysis of dUTP to dUMP without releasing the toxic dUTP intermediate. The chain is dCTP deaminase, dUMP-forming from Leptospira biflexa serovar Patoc (strain Patoc 1 / Ames).